The following is a 285-amino-acid chain: 2,3,4,5-tetrahydropyridine-2,6-dicarboxylate N-succinyltransferase (285 aa).

The protein belongs to the transferase hexapeptide repeat family.

It is found in the cytoplasm. The catalysed reaction is (S)-2,3,4,5-tetrahydrodipicolinate + succinyl-CoA + H2O = (S)-2-succinylamino-6-oxoheptanedioate + CoA. It functions in the pathway amino-acid biosynthesis; L-lysine biosynthesis via DAP pathway; LL-2,6-diaminopimelate from (S)-tetrahydrodipicolinate (succinylase route): step 1/3. The protein is 2,3,4,5-tetrahydropyridine-2,6-dicarboxylate N-succinyltransferase of Beijerinckia indica subsp. indica (strain ATCC 9039 / DSM 1715 / NCIMB 8712).